Here is a 131-residue protein sequence, read N- to C-terminus: Putative protein PTGES3L (131 aa).

The 89-residue stretch at 3–91 (RQPARTLWYD…KEKVAWPRLT (89 aa)) folds into the CS domain.

This sequence belongs to the p23/wos2 family.

In Mus musculus (Mouse), this protein is Putative protein PTGES3L (Ptges3l).